A 594-amino-acid polypeptide reads, in one-letter code: MKLVLIFLIINFLLIINCENLIKVLDVRLAQTHIIPIEGKTWNLKNKTQHMSIIGNRRALLLASFEDLNKSYYVSIWLDNKIIGSLELKDPSQLPQTEDNGERYSTKHHSVLLPKEWIRPNMKIKFTLTESKDNSSLNIDSSNFFYPDVSQDYTLKMWTLPFYLFGANDTNTQPFSVTNGIGSEITKELMERWSCSDIIAVNHPIQRIDWPYLVMEPRNGNPAMLITNSDQKKDGYAIMNGVLNILTEIREAFGESTSSIQIYSPLLHLGANGKYTNPGGGLGGGSRGTGDHKYTFTFFHEQGHAMGLPHAGEAFAAGSYPYVNGSLLGSEWGYDANHNELLGTFIPPTSDQFKNCRRNSVFDSKGRCVKQSVMQGGAGDYSSKYRYSMFADFEMTTIQNYFKNSIYYDQTKGTYKKWNDTSKSYFEYIPSTKNNGLWGLDDGTPIERDIEVYTILFTYSTVGPKELSQIYPILKSSKGNLMKRYDPTNKNDMKLITPGSGSWYCFASGCDYTVRVTFDDDSLEHILLRQGKRKYWNPMGDFKENLYNATSSNSFILRGINVKATKSIKKVELLETLMAWKGISNATVLVSKDF.

A signal peptide spans methionine 1–cysteine 18. The Peptidase M66 domain maps to proline 147–tyrosine 408. Histidine 300 is a Zn(2+) binding site. Glutamate 301 is an active-site residue. Zn(2+) contacts are provided by histidine 304 and histidine 310.

It belongs to the dictomallein family. Zn(2+) serves as cofactor.

The protein localises to the secreted. The sequence is that of Dictomallein-4 (dtmlD) from Dictyostelium discoideum (Social amoeba).